We begin with the raw amino-acid sequence, 486 residues long: Endoglucanase 16 (486 aa).

The first 30 residues, 1 to 30 (MANYKGRGNVMIRSMLLGLYGIINIVCVNG), serve as a signal peptide directing secretion. An N-linked (GlcNAc...) asparagine glycan is attached at Asn-29. Asp-87 functions as the Nucleophile in the catalytic mechanism. Residues His-407, Asp-458, and Glu-467 contribute to the active site.

It belongs to the glycosyl hydrolase 9 (cellulase E) family.

It localises to the secreted. It catalyses the reaction Endohydrolysis of (1-&gt;4)-beta-D-glucosidic linkages in cellulose, lichenin and cereal beta-D-glucans.. In Arabidopsis thaliana (Mouse-ear cress), this protein is Endoglucanase 16.